The primary structure comprises 447 residues: Nisin biosynthesis sensor protein NisK (447 aa).

Helical transmembrane passes span 15–35 (VIEI…LTFF) and 147–167 (TYLF…YHLI). The 213-residue stretch at 235-447 (ALSHDVKTPL…GAEVILKIKK (213 aa)) folds into the Histidine kinase domain. At H238 the chain carries Phosphohistidine; by autocatalysis.

Its subcellular location is the cell membrane. The catalysed reaction is ATP + protein L-histidine = ADP + protein N-phospho-L-histidine.. Member of the two-component regulatory system NisK/NisR involved in the regulation of the biosynthesis of lantibiotic nisin. NisK may function as a membrane-associated protein kinase that phosphorylates NisR in response to environmental signals. This is Nisin biosynthesis sensor protein NisK (nisK) from Lactococcus lactis subsp. lactis (Streptococcus lactis).